The sequence spans 175 residues: ATP-dependent protease subunit HslV (175 aa).

Residue Thr2 is part of the active site. Residues Gly158, Cys161, and Thr164 each coordinate Na(+).

It belongs to the peptidase T1B family. HslV subfamily. A double ring-shaped homohexamer of HslV is capped on each side by a ring-shaped HslU homohexamer. The assembly of the HslU/HslV complex is dependent on binding of ATP.

It is found in the cytoplasm. The enzyme catalyses ATP-dependent cleavage of peptide bonds with broad specificity.. Allosterically activated by HslU binding. In terms of biological role, protease subunit of a proteasome-like degradation complex believed to be a general protein degrading machinery. The sequence is that of ATP-dependent protease subunit HslV from Haemophilus influenzae (strain 86-028NP).